Here is a 151-residue protein sequence, read N- to C-terminus: Caveolin-3 (151 aa).

Topologically, residues 1–83 (MMTEEHTDLE…RLLSTLLGVP (83 aa)) are cytoplasmic. Residue Lys38 forms a Glycyl lysine isopeptide (Lys-Gly) (interchain with G-Cter in SUMO3) linkage. The helical intramembrane region spans 84–104 (LALLWGFLFACISFCHIWAVV). Over 105 to 151 (PCIKSYLIEIQCISHIYSLCIRTFCNPLFAALGQVCSNIKVVLRREG) the chain is Cytoplasmic.

This sequence belongs to the caveolin family. Homooligomer. Interacts with DYSF. Interacts with DLG1 and KCNA5; forms a ternary complex. Interacts with DAG1 (via its C-terminal); the interaction prevents binding of DAG1 with DMD. Interacts with TRIM72. Interacts with MUSK; may regulate MUSK signaling. Interacts with POPDC1. Interacts with CAVIN1, CAVIN2 and CAVIN4. Post-translationally, sumoylation with SUMO3 by PIAS4 may reduce agonist-induced internalization and desensitization of adrenergic receptor ABRD2. In terms of tissue distribution, expressed predominantly in muscle.

It is found in the golgi apparatus membrane. The protein localises to the cell membrane. Its subcellular location is the membrane. It localises to the caveola. The protein resides in the sarcolemma. May act as a scaffolding protein within caveolar membranes. Interacts directly with G-protein alpha subunits and can functionally regulate their activity. May also regulate voltage-gated potassium channels. Plays a role in the sarcolemma repair mechanism of both skeletal muscle and cardiomyocytes that permits rapid resealing of membranes disrupted by mechanical stress. Mediates the recruitment of CAVIN2 and CAVIN3 proteins to the caveolae. The protein is Caveolin-3 (Cav3) of Rattus norvegicus (Rat).